The chain runs to 598 residues: Polypeptide N-acetylgalactosaminyltransferase 17 (598 aa).

Residues Met-1–Arg-6 lie on the Cytoplasmic side of the membrane. A helical; Signal-anchor for type II membrane protein transmembrane segment spans residues Val-7 to Lys-27. Over Cys-28–Lys-598 the chain is Lumenal. The N-linked (GlcNAc...) asparagine glycan is linked to Asn-50. Intrachain disulfides connect Cys-142–Cys-373 and Cys-364–Cys-443. A catalytic subdomain A region spans residues Leu-151 to Arg-262. The substrate site is built by Asp-192 and Arg-223. 3 residues coordinate Mn(2+): Asp-246, His-248, and His-378. The tract at residues Pro-319–Arg-381 is catalytic subdomain B. Substrate is bound by residues Arg-381 and Tyr-386. N-linked (GlcNAc...) asparagine glycosylation is found at Asn-461 and Asn-486. The region spanning Ala-465 to Lys-594 is the Ricin B-type lectin domain. Cystine bridges form between Cys-478–Cys-494, Cys-526–Cys-541, and Cys-568–Cys-586.

Belongs to the glycosyltransferase 2 family. GalNAc-T subfamily. Mn(2+) is required as a cofactor. In terms of tissue distribution, highly expressed in brain and heart. Weakly expressed in kidney, liver, lung and spleen.

It is found in the golgi apparatus membrane. It carries out the reaction L-seryl-[protein] + UDP-N-acetyl-alpha-D-galactosamine = a 3-O-[N-acetyl-alpha-D-galactosaminyl]-L-seryl-[protein] + UDP + H(+). The catalysed reaction is L-threonyl-[protein] + UDP-N-acetyl-alpha-D-galactosamine = a 3-O-[N-acetyl-alpha-D-galactosaminyl]-L-threonyl-[protein] + UDP + H(+). Its pathway is protein modification; protein glycosylation. Its function is as follows. May catalyze the initial reaction in O-linked oligosaccharide biosynthesis, the transfer of an N-acetyl-D-galactosamine residue to a serine or threonine residue on the protein receptor. In Homo sapiens (Human), this protein is Polypeptide N-acetylgalactosaminyltransferase 17.